The primary structure comprises 74 residues: EMBRYO SURROUNDING FACTOR 1-like protein 4 (74 aa).

An N-terminal signal peptide occupies residues Met1 to Cys22. 4 disulfides stabilise this stretch: Cys36–Cys51, Cys41–Cys70, Cys49–Cys66, and Cys52–Cys59.

It belongs to the MEG family. In terms of tissue distribution, expressed in flowers.

In Arabidopsis thaliana (Mouse-ear cress), this protein is EMBRYO SURROUNDING FACTOR 1-like protein 4 (ESFL4).